Reading from the N-terminus, the 199-residue chain is Photosystem I reaction center subunit XI (199 aa).

2 helical membrane-spanning segments follow: residues 108 to 128 and 165 to 185; these read ITAG…LLVL and FWLG…TLHL.

The protein belongs to the PsaL family.

It localises to the cellular thylakoid membrane. This Prochlorococcus marinus (strain MIT 9515) protein is Photosystem I reaction center subunit XI.